Consider the following 634-residue polypeptide: tRNA uridine 5-carboxymethylaminomethyl modification enzyme MnmG (634 aa).

FAD is bound at residue 14 to 19 (GGGHAG). 279-293 (GPRYCPSIEDKVVRF) serves as a coordination point for NAD(+).

This sequence belongs to the MnmG family. As to quaternary structure, homodimer. Heterotetramer of two MnmE and two MnmG subunits. It depends on FAD as a cofactor.

Its subcellular location is the cytoplasm. In terms of biological role, NAD-binding protein involved in the addition of a carboxymethylaminomethyl (cmnm) group at the wobble position (U34) of certain tRNAs, forming tRNA-cmnm(5)s(2)U34. The sequence is that of tRNA uridine 5-carboxymethylaminomethyl modification enzyme MnmG from Xanthomonas axonopodis pv. citri (strain 306).